Reading from the N-terminus, the 118-residue chain is Cell division topological specificity factor (118 aa).

The disordered stretch occupies residues 86–118 (RSQAKAVSSQENGASSQEAVSSQESVSTPGAME). The span at 99–112 (ASSQEAVSSQESVS) shows a compositional bias: low complexity.

The protein belongs to the MinE family.

In terms of biological role, prevents the cell division inhibition by proteins MinC and MinD at internal division sites while permitting inhibition at polar sites. This ensures cell division at the proper site by restricting the formation of a division septum at the midpoint of the long axis of the cell. The chain is Cell division topological specificity factor from Prochlorococcus marinus (strain MIT 9313).